The following is a 1433-amino-acid chain: Probable ATP-dependent RNA helicase spindle-E (1433 aa).

Residues 76–98 (NRTLDELDSDDEEENMQEQPSVR) are disordered. The segment covering 81 to 91 (ELDSDDEEENM) has biased composition (acidic residues). In terms of domain architecture, Helicase ATP-binding spans 127–294 (MKAIRENPVV…FATSSAFPPV (168 aa)). Position 140-147 (140-147 (GETGCGKT)) interacts with ATP. Residues 240–243 (DEVH) carry the DEAH box motif. A Helicase C-terminal domain is found at 354 to 526 (QSLQSYEEAK…NSVLKAKELE (173 aa)). The 64-residue stretch at 937–1000 (ASAVTKGLQL…RLMPHELKRD (64 aa)) folds into the Tudor domain.

Belongs to the DEAD box helicase family. DEAH subfamily.

The protein localises to the cytoplasm. The catalysed reaction is ATP + H2O = ADP + phosphate + H(+). Probable ATP-binding RNA helicase which plays a central role during spermatogenesis and oogenesis by repressing transposable elements and preventing their mobilization, which is essential for the germline integrity. Acts via the piRNA metabolic process, which mediates the repression of transposable elements during meiosis by forming complexes composed of piRNAs and Piwi and govern the methylation and subsequent repression of transposons. Involved in the repression of LTR retrotransposon copia. Also involved in telomere regulation by repressing specialized telomeric retroelements HeT-A, TAHRE, and TART; Drosophila telomeres being maintained by transposition of specialized telomeric retroelements. Involved in telomeric trans-silencing, a repression mechanism by which a transposon or a transgene inserted in subtelomeric heterochromatin has the capacity to repress in trans in the female germline, a homologous transposon, or transgene located in euchromatin. Involved in the repression of testis-expressed Stellate genes by the homologous Su(Ste) repeats. Required for anteroposterior and dorsoventral axis formation during oogenesis. The polypeptide is Probable ATP-dependent RNA helicase spindle-E (spn-E) (Drosophila virilis (Fruit fly)).